A 362-amino-acid chain; its full sequence is Histidinol-phosphate aminotransferase (362 aa).

The residue at position 211 (K211) is an N6-(pyridoxal phosphate)lysine.

The protein belongs to the class-II pyridoxal-phosphate-dependent aminotransferase family. Histidinol-phosphate aminotransferase subfamily. In terms of assembly, homodimer. Pyridoxal 5'-phosphate serves as cofactor.

It carries out the reaction L-histidinol phosphate + 2-oxoglutarate = 3-(imidazol-4-yl)-2-oxopropyl phosphate + L-glutamate. Its pathway is amino-acid biosynthesis; L-histidine biosynthesis; L-histidine from 5-phospho-alpha-D-ribose 1-diphosphate: step 7/9. This chain is Histidinol-phosphate aminotransferase, found in Serratia proteamaculans (strain 568).